Reading from the N-terminus, the 218-residue chain is Ribose-5-phosphate isomerase A (218 aa).

Substrate is bound by residues 28 to 31, 81 to 84, and 94 to 97; these read TGST, DGAD, and KGGG. The active-site Proton acceptor is the glutamate 103. Residue lysine 121 coordinates substrate.

Belongs to the ribose 5-phosphate isomerase family. Homodimer.

It carries out the reaction aldehydo-D-ribose 5-phosphate = D-ribulose 5-phosphate. Its pathway is carbohydrate degradation; pentose phosphate pathway; D-ribose 5-phosphate from D-ribulose 5-phosphate (non-oxidative stage): step 1/1. Catalyzes the reversible conversion of ribose-5-phosphate to ribulose 5-phosphate. This Alcanivorax borkumensis (strain ATCC 700651 / DSM 11573 / NCIMB 13689 / SK2) protein is Ribose-5-phosphate isomerase A.